The primary structure comprises 485 residues: MSIRYESVENLLTLIKDKKIKPSDVVKDIYDAIEETDPTIKSFLALDKENAIKKAQELDELQAKDQMDGKLFGIPMGIKDNIITNGLETTCASKMLEGFVPIYESTVMEKLHNENAVLIGKLNMDEFAMGGSTETSYFKKTVNPFDHKAVPGGSSGGSAAAVAAGLVPFSLGSDTGGSIRQPAAYCGVVGMKPTYGRVSRFGLVAFASSLDQIGPLTRNVKDNAIVLEAISGADVNDSTSAPVDDVDFTSEIGKDIKGLKVALPKEYLGEGVADDVKEAVQNAVETLKSLGAVVEEVSLPNTKFGIPSYYVIASSEASSNLSRFDGIRYGYHSKEAHSLEELYKMSRSEGFGKEVKRRIFLGTFALSSGYYDAYYKKSQKVRTLIKNDFDKVFENYDVVVGPTAPTTAFNLGEEIDDPLTMYANDLLTTPVNLAGLPGISVPCGQSNGRPIGLQFIGKPFDEKTLYRVAYQYETQYNLHDVYEKL.

Residues lysine 79 and serine 154 each act as charge relay system in the active site. Serine 178 serves as the catalytic Acyl-ester intermediate.

It belongs to the amidase family. GatA subfamily. Heterotrimer of A, B and C subunits.

It carries out the reaction L-glutamyl-tRNA(Gln) + L-glutamine + ATP + H2O = L-glutaminyl-tRNA(Gln) + L-glutamate + ADP + phosphate + H(+). Functionally, allows the formation of correctly charged Gln-tRNA(Gln) through the transamidation of misacylated Glu-tRNA(Gln) in organisms which lack glutaminyl-tRNA synthetase. The reaction takes place in the presence of glutamine and ATP through an activated gamma-phospho-Glu-tRNA(Gln). The sequence is that of Glutamyl-tRNA(Gln) amidotransferase subunit A from Staphylococcus aureus (strain USA300 / TCH1516).